The primary structure comprises 801 residues: Transcription initiation factor TFIID subunit 5 (801 aa).

A disordered region spans residues 1-69 (MAALAEEQTE…GDGGTPKPGV (69 aa)). Gly residues predominate over residues 30–51 (DGAGEGSGGTPNNGPNGGGGGN). The LisH domain maps to 93-125 (HDRQTLLAVLQFLRQSNLREAEEALRREARLLE). Disordered stretches follow at residues 156–176 (VPGSAAPEPPGTGASVTSVFS) and 385–438 (VPLD…DSDK). Acidic residues predominate over residues 385–396 (VPLDDEDEEGEN). Over residues 408 to 419 (KDSIGSKSKKQD) the composition is skewed to basic and acidic residues. WD repeat units follow at residues 469 to 508 (NAYQGLTAVDVTDDSSLIAGGFADSTVRVWSVTPKKLRSV), 542 to 581 (GHSGPVYGASFSPDRNYLLSSSEDGTVRLWSLQTFTCLVG), 584 to 625 (GHNY…RIFA), 626 to 667 (GHLA…RIFT), 668 to 707 (GHKGPIHSLTFSPNGRFLATGATDGRVLLWDIGHGLMVGE), and 710 to 749 (GHTDTVCSLRFSRDGEILASGSMDNTVRLWDAVKAFEDLE).

Belongs to the WD repeat TAF5 family. In terms of assembly, homodimer. Component of the TFIID basal transcription factor complex, composed of TATA-box-binding protein TBP, and a number of TBP-associated factors (TAFs), including TAF1, TAF2, TAF3, TAF4, TAF5, TAF6, TAF7, TAF8, TAF9, TAF10, TAF11, TAF12 and TAF13. The TFIID complex structure can be divided into 3 modules TFIID-A, TFIID-B, and TFIID-C. TAF5 forms the TFIID-A module together with TAF3 and TBP, and in TFIID-B with TAF8. Component of the TFTC-HAT complex, at least composed of TAF5L, TAF6L, TADA3L, SUPT3H/SPT3, TAF2, TAF4, TAF5, GCN5L2/GCN5, TAF10 and TRRAP. TBP is not part of the TFTC-HAT complex. Interacts strongly with the histone H4-related TAF6 and the histone H3-related TAF9, as well as a stable complex comprised of both TAF6 and TAF9. Apparently weaker interactions with TBP, TAF1, TAF11, and TAF12, but not TAF7, also have been observed.

It is found in the nucleus. Its function is as follows. The TFIID basal transcription factor complex plays a major role in the initiation of RNA polymerase II (Pol II)-dependent transcription. TFIID recognizes and binds promoters with or without a TATA box via its subunit TBP, a TATA-box-binding protein, and promotes assembly of the pre-initiation complex (PIC). The TFIID complex consists of TBP and TBP-associated factors (TAFs), including TAF1, TAF2, TAF3, TAF4, TAF5, TAF6, TAF7, TAF8, TAF9, TAF10, TAF11, TAF12 and TAF13. The TFIID complex structure can be divided into 3 modules TFIID-A, TFIID-B, and TFIID-C. TAF5 is involved in two modules of TFIID, in TFIID-A together with TAF3 and TBP, and in TFIID-B with TAF8. Involved in contacts between TFIID and TFIIF in the PIC. The chain is Transcription initiation factor TFIID subunit 5 (Taf5) from Mus musculus (Mouse).